A 291-amino-acid polypeptide reads, in one-letter code: ATP synthase gamma chain (291 aa).

This sequence belongs to the ATPase gamma chain family. As to quaternary structure, F-type ATPases have 2 components, CF(1) - the catalytic core - and CF(0) - the membrane proton channel. CF(1) has five subunits: alpha(3), beta(3), gamma(1), delta(1), epsilon(1). CF(0) has three main subunits: a, b and c.

It localises to the cell inner membrane. Functionally, produces ATP from ADP in the presence of a proton gradient across the membrane. The gamma chain is believed to be important in regulating ATPase activity and the flow of protons through the CF(0) complex. This chain is ATP synthase gamma chain, found in Cupriavidus pinatubonensis (strain JMP 134 / LMG 1197) (Cupriavidus necator (strain JMP 134)).